Consider the following 228-residue polypeptide: Thermonuclease (228 aa).

The first 23 residues, 1 to 23, serve as a signal peptide directing secretion; it reads MTEYLLSAGICMAIVSILLIGMA. A propeptide spanning residues 24–60 is cleaved from the precursor; the sequence is ISNVSKEQYAKRFFFFATSCLVLTLVVASSLSSSANA. Asp100 lines the Ca(2+) pocket. Residue Arg114 is part of the active site. Ca(2+) contacts are provided by Asp119 and Thr120. Active-site residues include Glu122 and Arg166.

The protein belongs to the thermonuclease family. Ca(2+) is required as a cofactor.

The protein localises to the secreted. It carries out the reaction Endonucleolytic cleavage to nucleoside 3'-phosphates and 3'-phosphooligonucleotide end-products.. Functionally, enzyme that catalyzes the hydrolysis of both DNA and RNA at the 5' position of the phosphodiester bond. This Staphylococcus aureus (strain MRSA252) protein is Thermonuclease (nuc).